The sequence spans 312 residues: Malate dehydrogenase (312 aa).

NAD(+)-binding positions include 7–13 (GAAGGIG) and aspartate 34. Residues arginine 81 and arginine 87 each coordinate substrate. Residues asparagine 94 and 117 to 119 (ITN) each bind NAD(+). Positions 119 and 153 each coordinate substrate. Residue histidine 177 is the Proton acceptor of the active site. Methionine 227 provides a ligand contact to NAD(+).

This sequence belongs to the LDH/MDH superfamily. MDH type 1 family. As to quaternary structure, homodimer.

The enzyme catalyses (S)-malate + NAD(+) = oxaloacetate + NADH + H(+). In terms of biological role, catalyzes the reversible oxidation of malate to oxaloacetate. In Photorhabdus laumondii subsp. laumondii (strain DSM 15139 / CIP 105565 / TT01) (Photorhabdus luminescens subsp. laumondii), this protein is Malate dehydrogenase.